Reading from the N-terminus, the 504-residue chain is Deoxyguanosinetriphosphate triphosphohydrolase (504 aa).

The HD domain occupies 66 to 273; sequence RLTHSMEVQQ…MEAADDISYC (208 aa).

Belongs to the dGTPase family. Type 1 subfamily. In terms of assembly, homotetramer. Mg(2+) serves as cofactor.

It carries out the reaction dGTP + H2O = 2'-deoxyguanosine + triphosphate + H(+). Its function is as follows. dGTPase preferentially hydrolyzes dGTP over the other canonical NTPs. This chain is Deoxyguanosinetriphosphate triphosphohydrolase, found in Citrobacter koseri (strain ATCC BAA-895 / CDC 4225-83 / SGSC4696).